The sequence spans 1941 residues: Xin actin-binding repeat-containing protein 1 (1941 aa).

The disordered stretch occupies residues 1 to 41 (MAEPQKSSKVAIKKMEDDLPPPPIPDSIQVIAPASQDPNPL). 27 Xin repeats span residues 108–123 (GEVQ…WALD), 143–158 (GDVK…QSVN), 176–191 (GDVH…QPLD), 215–230 (GDVK…QSLD), 255–270 (GDVK…EPLC), 293–308 (NAVR…QPLD), 331–346 (PDVS…QPLD), 368–383 (ADVT…QALD), 402–417 (GDVK…QPME), 439–454 (GDVK…CPLG), 475–490 (GDVK…LPLD), 510–525 (GNVK…TPLY), 548–563 (GDVK…RPLD), 586–601 (GDVR…QPMD), 624–639 (GDVK…QPMH), 658–673 (ADVK…QPLD), 697–712 (VDVK…EPLG), 736–751 (GEVS…KPLD), 769–784 (GSVH…YPMD), 805–820 (GDVG…YSLD), 842–857 (ANVK…QPLY), 880–895 (GDVK…KPLD), 917–932 (GDVQ…EPLD), 951–966 (GDVQ…QQVG), 982–997 (GDVR…QPVD), 1020–1035 (GDVK…QPMD), and 1055–1070 (ADVK…TPLD). Polar residues predominate over residues 1514-1565 (ASKQETKTLQSTIHQQESASTMRENTSTAIRTSTTRVQEASRTHTSVSQKSI). Disordered stretches follow at residues 1514 to 1568 (ASKQ…IASH), 1715 to 1856 (ASGS…PPPA), and 1914 to 1941 (YKAR…GEVG). Over residues 1820 to 1833 (SASTNNSTNRSTKS) the composition is skewed to low complexity. The segment covering 1834-1843 (VPPPVPPKPP) has biased composition (pro residues).

The protein belongs to the Xin family. Expressed at intercalated disks in the heart (at protein level).

The protein localises to the cell junction. Its subcellular location is the adherens junction. The protein resides in the desmosome. Functionally, involved in cardiac morphogenesis, including heart midline formation, cardiac tubule looping, myocardial formation and maintenance of heart beat speed and rhythm. May protect actin filaments from depolymerization. May play a role in development of normal skeletal muscle morphology, muscle fiber type composition and regulation of muscle satellite cell activation and survival. The sequence is that of Xin actin-binding repeat-containing protein 1 from Gallus gallus (Chicken).